We begin with the raw amino-acid sequence, 784 residues long: Toll-like receptor 2 (784 aa).

The N-terminal stretch at 1–20 (MPHTLWMVWVLGVIISLSKE) is a signal peptide. Topologically, residues 21-587 (ESSNQASLSC…VRLSVSECHR (567 aa)) are extracellular. A disulfide bridge connects residues C30 and C36. LRR repeat units follow at residues 54 to 77 (VKSL…RCVN), 78 to 101 (LQAL…SLGS), 102 to 125 (LEHL…PLSS), 126 to 150 (LTFL…HLTK), 151 to 175 (LQIL…GLTF), 176 to 199 (LEEL…SIQN), 200 to 223 (VSHL…VTSS), 224 to 250 (VECL…TNSL), 251 to 278 (IKKF…QISG), 279 to 308 (LLEL…DPGK), 309 to 337 (VETL…LTER), 338 to 361 (VKRI…HLKS), 362 to 388 (LEYL…AWPS), 389 to 414 (LQTL…TLKN), 415 to 437 (LTNV…WPEK), 438 to 457 (MKYL…CIPK), 458 to 478 (TLEI…NLPQ), 479 to 500 (LKEL…LLPM), and 501 to 524 (LLVL…SFHT). N114 is a glycosylation site (N-linked (GlcNAc...) asparagine). The N-linked (GlcNAc...) asparagine glycan is linked to N199. C353 and C382 are disulfide-bonded. N414 is a glycosylation site (N-linked (GlcNAc...) asparagine). C432 and C454 are oxidised to a cystine. N442 is a glycosylation site (N-linked (GlcNAc...) asparagine). The LRRCT domain maps to 525–579 (LKTLEAGGNNFICSCEFLSFTQEQQALAKVLIDWPANYLCDSPSHVRGQQVQDVR). The helical transmembrane segment at 588–608 (TALVSGMCCALFLLILLTGVL) threads the bilayer. Over 609–784 (CHRFHGLWYM…WVNLRAAIKS (176 aa)) the chain is Cytoplasmic. One can recognise a TIR domain in the interval 639–782 (ICYDAFVSYS…GFWVNLRAAI (144 aa)). K754 is covalently cross-linked (Glycyl lysine isopeptide (Lys-Gly) (interchain with G-Cter in ubiquitin)). The short motif at 761–778 (YLEWPMDEAQREGFWVNL) is the ATG16L1-binding motif element.

The protein belongs to the Toll-like receptor family. As to quaternary structure, interacts with LY96, TLR1 and TLR6 (via extracellular domain). TLR2 seems to exist in heterodimers with either TLR1 or TLR6 before stimulation by the ligand. The heterodimers form bigger oligomers in response to their corresponding ligands as well as further heterotypic associations with other receptors such as CD14 and/or CD36. Binds MYD88 (via TIR domain). Interacts with TICAM1. Interacts with CNPY3. Interacts with ATG16L1. Interacts with PPP1R11. Interacts with TICAM2. Interacts with TIRAP. Post-translationally, ubiquitinated at Lys-754 by PPP1R11, leading to its degradation. Deubiquitinated by USP2. In terms of processing, glycosylation of Asn-442 is critical for secretion of the N-terminal ectodomain of TLR2.

The protein resides in the membrane. It localises to the cytoplasmic vesicle. It is found in the phagosome membrane. The protein localises to the membrane raft. Cooperates with LY96 to mediate the innate immune response to bacterial lipoproteins and other microbial cell wall components. Cooperates with TLR1 or TLR6 to mediate the innate immune response to bacterial lipoproteins or lipopeptides. Acts via MYD88 and TRAF6, leading to NF-kappa-B activation, cytokine secretion and the inflammatory response. May also promote apoptosis in response to lipoproteins. Forms activation clusters composed of several receptors depending on the ligand, these clusters trigger signaling from the cell surface and subsequently are targeted to the Golgi in a lipid-raft dependent pathway. Forms the cluster TLR2:TLR6:CD14:CD36 in response to diacylated lipopeptides and TLR2:TLR1:CD14 in response to triacylated lipopeptides. The protein is Toll-like receptor 2 (TLR2) of Gorilla gorilla gorilla (Western lowland gorilla).